The following is a 198-amino-acid chain: dITP/XTP pyrophosphatase (198 aa).

Residue 10–15 (SGSDHK) coordinates substrate. Positions 43 and 72 each coordinate Mg(2+). Catalysis depends on D72, which acts as the Proton acceptor. Residues S73, 154–157 (FGYD), K177, and 182–183 (HR) each bind substrate.

This sequence belongs to the HAM1 NTPase family. In terms of assembly, homodimer. It depends on Mg(2+) as a cofactor.

The enzyme catalyses XTP + H2O = XMP + diphosphate + H(+). It catalyses the reaction dITP + H2O = dIMP + diphosphate + H(+). The catalysed reaction is ITP + H2O = IMP + diphosphate + H(+). In terms of biological role, pyrophosphatase that catalyzes the hydrolysis of nucleoside triphosphates to their monophosphate derivatives, with a high preference for the non-canonical purine nucleotides XTP (xanthosine triphosphate), dITP (deoxyinosine triphosphate) and ITP. Seems to function as a house-cleaning enzyme that removes non-canonical purine nucleotides from the nucleotide pool, thus preventing their incorporation into DNA/RNA and avoiding chromosomal lesions. The protein is dITP/XTP pyrophosphatase of Leptospira biflexa serovar Patoc (strain Patoc 1 / Ames).